Consider the following 215-residue polypeptide: AAIFFAGTPILESAMVYPLAICGACILTSIAGTFFVKLGTNNSIMGALYKGLIATGVFSVAGLAVATYATVGWGTIGTVAGMEITGTNLFFCGLVGLVVTALIVVITEYYTGTNKRPVNSIAQASVTGHGTNVIQGLAVSLESTALPAIVIVGGIIGTYQLGGLFGTGIAVTAMLGLAGMIVALDAFGPVTDNAGGIAEMAGLDPDVRKRPTRWM.

The next 5 membrane-spanning stretches (helical) occupy residues 16–36 (VYPL…TFFV), 51–71 (GLIA…YATV), 86–106 (GTNL…IVVI), 136–156 (GLAV…GGII), and 164–184 (LFGT…IVAL).

This sequence belongs to the H(+)-translocating pyrophosphatase (TC 3.A.10) family. As to quaternary structure, homodimer. Mg(2+) serves as cofactor.

It localises to the cell inner membrane. It catalyses the reaction diphosphate + H2O + H(+)(in) = 2 phosphate + 2 H(+)(out). Proton pump that utilizes the energy of pyrophosphate hydrolysis as the driving force for proton movement across the membrane. Generates a proton motive force. This Rhizobium leguminosarum bv. trifolii protein is Pyrophosphate-energized proton pump 2 (hppA2).